The chain runs to 43 residues: Potassium channel toxin gamma-KTx 4.1 (43 aa).

Intrachain disulfides connect Cys5–Cys23, Cys11–Cys34, Cys20–Cys39, and Cys24–Cys41.

This sequence belongs to the ergtoxin family. Gamma-KTx 4 subfamily. In terms of tissue distribution, expressed by the venom gland.

The protein resides in the secreted. Its function is as follows. Reversibly blocks Kv11/ERG potassium channels. The sequence is that of Potassium channel toxin gamma-KTx 4.1 from Centruroides limpidus (Mexican scorpion).